The chain runs to 244 residues: tRNA pseudouridine synthase A (244 aa).

D52 functions as the Nucleophile in the catalytic mechanism. Substrate is bound at residue Y110.

It belongs to the tRNA pseudouridine synthase TruA family. In terms of assembly, homodimer.

The catalysed reaction is uridine(38/39/40) in tRNA = pseudouridine(38/39/40) in tRNA. Functionally, formation of pseudouridine at positions 38, 39 and 40 in the anticodon stem and loop of transfer RNAs. The sequence is that of tRNA pseudouridine synthase A from Geobacter sulfurreducens (strain ATCC 51573 / DSM 12127 / PCA).